We begin with the raw amino-acid sequence, 100 residues long: Elevenin-Vc1 (100 aa).

The signal sequence occupies residues 1-24 (MAPSQKALLVLVLSMLLTASDSWA). The cysteines at positions 29 and 38 are disulfide-linked. A propeptide spanning residues 44–100 (KRGGDSLSVGGSAELDDALTDPFLRSEEPREWRELTRLSRVLQTFLSHPTGETEQHD) is cleaved from the precursor.

It belongs to the elevenin family. As to quaternary structure, monomer. As to expression, expressed by the venom duct.

The protein resides in the secreted. Its function is as follows. May mimic the function of prey elevenin neuropeptide. In vivo, intracranial injection in mice induces hyperactivity (tested at 5 and 10 nM). The protein is Elevenin-Vc1 of Conus victoriae (Queen Victoria cone).